Consider the following 835-residue polypeptide: Protein VP3 (835 aa).

Positions Lys171–Arg245 are N7-methyltransferase activity. The interval Trp246–Gly428 is 2'-O-methyltransferase activity. The interval Val429–Asn555 is N7-methyltransferase activity. The segment at Lys556–Thr692 is GTase/RTPase activity. The segment at Tyr693–Glu835 is 2'-5'-phosphodiesterase activity. Active-site for 2'-5'-phosphodiesterase activity residues include His718, Thr720, His797, and Thr799.

Belongs to the rotavirus VP3 family. As to quaternary structure, interacts with VP1. Interacts with VP2.

It is found in the virion. The enzyme catalyses a 5'-end diphospho-ribonucleoside in mRNA + GTP + H(+) = a 5'-end (5'-triphosphoguanosine)-ribonucleoside in mRNA + diphosphate. It carries out the reaction a 5'-end (5'-triphosphoguanosine)-ribonucleoside in mRNA + S-adenosyl-L-methionine = a 5'-end (N(7)-methyl 5'-triphosphoguanosine)-ribonucleoside in mRNA + S-adenosyl-L-homocysteine. It catalyses the reaction 5'-triphosphoadenylyl-(2'-&gt;5')-adenylyl-(2'-&gt;5')-adenosine + 2 H2O = 2 AMP + ATP + 2 H(+). Multifunctional enzyme involved in mRNA capping. Catalyzes the formation of the 5' cap structure on the viral plus-strand transcripts. Specifically binds to GTP and displays guanylyltransferase and methyltransferase activities. Has affinity for ssRNA but not for dsRNA. Capping activity is non-specific and caps RNAs that initiate with either a G or an A residue. Together with VP1 polymerase, forms a VP1-VP3 complex positioned near the channels situated at each of the five-fold vertices of the core. Following infection, the outermost layer of the virus is lost, leaving a double-layered particle (DLP) made up of the core and VP6 shell. VP1 then catalyzes the transcription of fully conservative plus-strand genomic RNAs that are capped by VP3 and extruded through the DLP's channels into the cytoplasm where they function as mRNAs for translation of viral proteins. DLPs probably have an RNA triphosphatase activity as well, whereas open cores do not. Its function is as follows. Counteracts the host innate immune response thanks to its phosphodiesterase that degrades the 5'-triphosphorylated, 2'-5' linked adenylate oligomers produced by the host cell IFN-inducible 2',5'-oligoadenylate synthetase (OAS). The host RNaseL is therefore not activated. This chain is Protein VP3, found in Rotavirus A (strain RVA/Cow/France/RF/1975/G6P6[1]) (RV-A).